We begin with the raw amino-acid sequence, 150 residues long: Avidin-related protein 2 (150 aa).

A signal peptide spans 1–24 (MVHATSPLLLLLLLSLALVAPSLS). The 122-residue stretch at 26–147 (RKCSLTGEWD…GNNDFTRQHT (122 aa)) folds into the Avidin-like domain. An intrachain disulfide couples C28 to C105. Residues N36, S40, Y57, T59, and D63 each coordinate biotin. N-linked (GlcNAc...) asparagine glycosylation is found at N67 and N93. Residues S95, S99, and N140 each contribute to the biotin site.

In terms of assembly, homotetramer. In terms of processing, glycosylated.

It localises to the secreted. Forms a strong non-covalent specific complex with biotin. The chain is Avidin-related protein 2 (AVR2) from Gallus gallus (Chicken).